Consider the following 213-residue polypeptide: LexA repressor (213 aa).

Residues 27–47 constitute a DNA-binding region (H-T-H motif); sequence QTEIARAFGFKGIRAAQYHLE. Catalysis depends on for autocatalytic cleavage activity residues S133 and K170.

This sequence belongs to the peptidase S24 family. As to quaternary structure, homodimer.

It catalyses the reaction Hydrolysis of Ala-|-Gly bond in repressor LexA.. In terms of biological role, represses a number of genes involved in the response to DNA damage (SOS response), including recA and lexA. Has been shown to bind to the palindromic sequence 5'-CTG-N(8-12)-C-[TC]-G. In the presence of single-stranded DNA, RecA interacts with LexA causing an autocatalytic cleavage which disrupts the DNA-binding part of LexA, leading to derepression of the SOS regulon and eventually DNA repair. The chain is LexA repressor from Xanthomonas citri (Xanthomonas campestris pv. citri).